The following is a 210-amino-acid chain: MADTKEMKKVLFGPILDNNPIALQILGVCSALAVTTKLETALVMSLALTAVTAFSNLFISMIRSQIPSSVRIIVQMTIIASLVIVVDQILKAYSYEISKQLSVFVGLIITNCIVMGRAEAFAMKSPPFISFLDGIGNGLGYSFVLIVIGTIKELFGFGTILGFEILPLIQNGGWYQGNGLLILPFSSFFLIGGLIWFIRTIKPEQVEPKE.

The next 6 helical transmembrane spans lie at 10-30, 42-62, 72-92, 103-123, 143-163, and 178-198; these read VLFGPILDNNPIALQILGVCS, LVMSLALTAVTAFSNLFISMI, IIVQMTIIASLVIVVDQILKA, VFVGLIITNCIVMGRAEAFAM, FVLIVIGTIKELFGFGTILGF, and NGLLILPFSSFFLIGGLIWFI.

It belongs to the NqrDE/RnfAE family. As to quaternary structure, composed of six subunits; NqrA, NqrB, NqrC, NqrD, NqrE and NqrF.

It is found in the cell inner membrane. It catalyses the reaction a ubiquinone + n Na(+)(in) + NADH + H(+) = a ubiquinol + n Na(+)(out) + NAD(+). Functionally, NQR complex catalyzes the reduction of ubiquinone-1 to ubiquinol by two successive reactions, coupled with the transport of Na(+) ions from the cytoplasm to the periplasm. NqrA to NqrE are probably involved in the second step, the conversion of ubisemiquinone to ubiquinol. This Pseudoalteromonas atlantica (strain T6c / ATCC BAA-1087) protein is Na(+)-translocating NADH-quinone reductase subunit D.